The chain runs to 228 residues: UPF0134 protein MPN_137 (228 aa).

It belongs to the UPF0134 family.

This chain is UPF0134 protein MPN_137, found in Mycoplasma pneumoniae (strain ATCC 29342 / M129 / Subtype 1) (Mycoplasmoides pneumoniae).